The primary structure comprises 321 residues: Cytochrome c biogenesis protein CcsA (321 aa).

Helical transmembrane passes span 17–37 (IVSI…IVGL), 44–64 (GMIS…IYSG), 71–91 (LYES…IPYF), 98–118 (LSLV…SGLL), 143–163 (MVLS…LLVI), 225–245 (VISL…VWAN), 258–275 (ETWA…LHTR), and 286–306 (AIVA…VNLL).

It belongs to the CcmF/CycK/Ccl1/NrfE/CcsA family. May interact with Ccs1.

The protein localises to the plastid. Its subcellular location is the chloroplast thylakoid membrane. Functionally, required during biogenesis of c-type cytochromes (cytochrome c6 and cytochrome f) at the step of heme attachment. The chain is Cytochrome c biogenesis protein CcsA from Buxus microphylla (Littleleaf boxwood).